Consider the following 230-residue polypeptide: 7-cyano-7-deazaguanine synthase (230 aa).

8–18 (LSGGMDSAVVT) serves as a coordination point for ATP. Zn(2+) contacts are provided by Cys-186, Cys-196, Cys-199, and Cys-202.

Belongs to the QueC family. Requires Zn(2+) as cofactor.

The catalysed reaction is 7-carboxy-7-deazaguanine + NH4(+) + ATP = 7-cyano-7-deazaguanine + ADP + phosphate + H2O + H(+). The protein operates within purine metabolism; 7-cyano-7-deazaguanine biosynthesis. Its function is as follows. Catalyzes the ATP-dependent conversion of 7-carboxy-7-deazaguanine (CDG) to 7-cyano-7-deazaguanine (preQ(0)). The chain is 7-cyano-7-deazaguanine synthase from Xylella fastidiosa (strain M23).